A 276-amino-acid polypeptide reads, in one-letter code: Glutamate 5-kinase (276 aa).

Position 14 (Lys14) interacts with ATP. Substrate is bound by residues Ser54, Asp141, and Asn157. ATP contacts are provided by residues 177–178 (SD) and 219–225 (TGGMLTK).

This sequence belongs to the glutamate 5-kinase family.

The protein localises to the cytoplasm. The catalysed reaction is L-glutamate + ATP = L-glutamyl 5-phosphate + ADP. It participates in amino-acid biosynthesis; L-proline biosynthesis; L-glutamate 5-semialdehyde from L-glutamate: step 1/2. In terms of biological role, catalyzes the transfer of a phosphate group to glutamate to form L-glutamate 5-phosphate. The protein is Glutamate 5-kinase of Listeria monocytogenes serotype 4b (strain CLIP80459).